The chain runs to 264 residues: Thymidylate synthase (264 aa).

Arg-21 lines the dUMP pocket. (6R)-5,10-methylene-5,6,7,8-tetrahydrofolate is bound at residue His-51. Position 126–127 (126–127 (RR)) interacts with dUMP. The active-site Nucleophile is Cys-146. DUMP-binding positions include 166–169 (RSAD), Asn-177, and 207–209 (HLY). Asp-169 contributes to the (6R)-5,10-methylene-5,6,7,8-tetrahydrofolate binding site. Ser-263 provides a ligand contact to (6R)-5,10-methylene-5,6,7,8-tetrahydrofolate.

It belongs to the thymidylate synthase family. Bacterial-type ThyA subfamily. As to quaternary structure, homodimer.

It is found in the cytoplasm. The catalysed reaction is dUMP + (6R)-5,10-methylene-5,6,7,8-tetrahydrofolate = 7,8-dihydrofolate + dTMP. It participates in pyrimidine metabolism; dTTP biosynthesis. Catalyzes the reductive methylation of 2'-deoxyuridine-5'-monophosphate (dUMP) to 2'-deoxythymidine-5'-monophosphate (dTMP) while utilizing 5,10-methylenetetrahydrofolate (mTHF) as the methyl donor and reductant in the reaction, yielding dihydrofolate (DHF) as a by-product. This enzymatic reaction provides an intracellular de novo source of dTMP, an essential precursor for DNA biosynthesis. This chain is Thymidylate synthase, found in Shouchella clausii (strain KSM-K16) (Alkalihalobacillus clausii).